The chain runs to 263 residues: Tryptophan synthase alpha chain (263 aa).

Catalysis depends on proton acceptor residues Glu49 and Asp60.

Belongs to the TrpA family. Tetramer of two alpha and two beta chains.

It catalyses the reaction (1S,2R)-1-C-(indol-3-yl)glycerol 3-phosphate + L-serine = D-glyceraldehyde 3-phosphate + L-tryptophan + H2O. The protein operates within amino-acid biosynthesis; L-tryptophan biosynthesis; L-tryptophan from chorismate: step 5/5. Functionally, the alpha subunit is responsible for the aldol cleavage of indoleglycerol phosphate to indole and glyceraldehyde 3-phosphate. This Clostridium kluyveri (strain NBRC 12016) protein is Tryptophan synthase alpha chain.